Here is a 225-residue protein sequence, read N- to C-terminus: Ribosomal RNA large subunit methyltransferase E (225 aa).

S-adenosyl-L-methionine contacts are provided by Gly-79, Trp-81, Asp-97, Asp-113, and Asp-137. The Proton acceptor role is filled by Lys-177.

Belongs to the class I-like SAM-binding methyltransferase superfamily. RNA methyltransferase RlmE family.

The protein resides in the cytoplasm. The enzyme catalyses uridine(2552) in 23S rRNA + S-adenosyl-L-methionine = 2'-O-methyluridine(2552) in 23S rRNA + S-adenosyl-L-homocysteine + H(+). In terms of biological role, specifically methylates the uridine in position 2552 of 23S rRNA at the 2'-O position of the ribose in the fully assembled 50S ribosomal subunit. This Acidiphilium cryptum (strain JF-5) protein is Ribosomal RNA large subunit methyltransferase E.